The primary structure comprises 385 residues: Lipid-A-disaccharide synthase 2 (385 aa).

The protein belongs to the LpxB family.

It catalyses the reaction a lipid X + a UDP-2-N,3-O-bis[(3R)-3-hydroxyacyl]-alpha-D-glucosamine = a lipid A disaccharide + UDP + H(+). The protein operates within bacterial outer membrane biogenesis; LPS lipid A biosynthesis. Functionally, condensation of UDP-2,3-diacylglucosamine and 2,3-diacylglucosamine-1-phosphate to form lipid A disaccharide, a precursor of lipid A, a phosphorylated glycolipid that anchors the lipopolysaccharide to the outer membrane of the cell. The polypeptide is Lipid-A-disaccharide synthase 2 (Legionella pneumophila (strain Lens)).